The chain runs to 140 residues: uncharacterized protein (140 aa).

This is an uncharacterized protein from Saccharomyces cerevisiae (strain ATCC 204508 / S288c) (Baker's yeast).